We begin with the raw amino-acid sequence, 421 residues long: Glutamyl-tRNA reductase (421 aa).

Substrate-binding positions include 49–52 (TCNR), Ser-109, 114–116 (EAQ), and Gln-120. The Nucleophile role is filled by Cys-50. 189 to 194 (GAGEMC) provides a ligand contact to NADP(+).

It belongs to the glutamyl-tRNA reductase family. Homodimer.

The catalysed reaction is (S)-4-amino-5-oxopentanoate + tRNA(Glu) + NADP(+) = L-glutamyl-tRNA(Glu) + NADPH + H(+). It functions in the pathway porphyrin-containing compound metabolism; protoporphyrin-IX biosynthesis; 5-aminolevulinate from L-glutamyl-tRNA(Glu): step 1/2. Its function is as follows. Catalyzes the NADPH-dependent reduction of glutamyl-tRNA(Glu) to glutamate 1-semialdehyde (GSA). This Magnetococcus marinus (strain ATCC BAA-1437 / JCM 17883 / MC-1) protein is Glutamyl-tRNA reductase.